Consider the following 726-residue polypeptide: ORC ubiquitin ligase 1 (726 aa).

The RING-type; degenerate zinc-finger motif lies at 18–56 (CHICLGKVRQPVICINNHVFCSICIDLWLKNNSQCPACR). Coiled coils occupy residues 87-129 (LRKT…TILD) and 155-270 (ETVA…MNSI). Position 210 is a phosphoserine (S210). Disordered regions lie at residues 276–334 (SADG…TSKA) and 436–460 (NVSNKDSSEDDISRSENEKKSECFS). The segment covering 280-290 (KGSKGSEEDVV) has biased composition (basic and acidic residues). A compositionally biased stretch (low complexity) spans 304-318 (SSTSSSSHLAKPSSS). Residues 319–334 (RLCDTSSARQESTSKA) are compositionally biased toward polar residues. The segment covering 446–457 (DISRSENEKKSE) has biased composition (basic and acidic residues). Residues S526, S553, S561, S568, and S570 each carry the phosphoserine modification. Disordered stretches follow at residues 570-602 (SSQGSEFLEEPDKLEEKTELNLSKGSLTNDQLE) and 687-726 (QSPWSTSFVPEKRNKNVNQSTKRKIQSSLSSASPSKATKS). The span at 579–588 (EPDKLEEKTE) shows a compositional bias: basic and acidic residues. Over residues 589–602 (LNLSKGSLTNDQLE) the composition is skewed to polar residues. A compositionally biased stretch (low complexity) spans 713 to 726 (SSLSSASPSKATKS). 2 positions are modified to phosphoserine: S719 and S721.

In terms of assembly, associates with ORC complex. Binds to chromatin; association is cell cycle-regulated, absent from mitotic chromosomes, is associated with chromatin from G1 and partially released from chromatin from mid S-phase. Auto-ubiquitinated.

It is found in the chromosome. It catalyses the reaction S-ubiquitinyl-[E2 ubiquitin-conjugating enzyme]-L-cysteine + [acceptor protein]-L-lysine = [E2 ubiquitin-conjugating enzyme]-L-cysteine + N(6)-ubiquitinyl-[acceptor protein]-L-lysine.. Its function is as follows. E3 ubiquitin ligase essential for DNA replication origin activation during S phase. Acts as a replication origin selector which selects the origins to be fired and catalyzes the multi-mono-ubiquitination of a subset of chromatin-bound ORC3 and ORC5 during S-phase. This Homo sapiens (Human) protein is ORC ubiquitin ligase 1.